A 1083-amino-acid polypeptide reads, in one-letter code: Regulator of the glycerol channel 1 (1083 aa).

2 disordered regions span residues 1-46 and 69-89; these read MSDY…GSSD and LKNEPASGNTQMNGPDGKENK. Polar residues predominate over residues 13-31; that stretch reads GGISKQPATPGSTRSSSRN. Serine 136, serine 249, serine 252, serine 481, and serine 537 each carry phosphoserine. The PH domain occupies 495–606; it reads CIRVGYLLKK…DCSLKDSTDS (112 aa). Residues 534–582 are disordered; sequence DSKSPRSKNKPVVEQSDISRVNKDGTNAGSHPSSKGTQDPKLTKRRKGL. Polar residues predominate over residues 549-570; sequence SDISRVNKDGTNAGSHPSSKGT. Serine 652, serine 765, and serine 813 each carry phosphoserine. Phosphothreonine occurs at positions 817 and 857. A phosphoserine mark is found at serine 866, serine 879, serine 918, serine 966, serine 969, and serine 975. The tract at residues 979-1083 is disordered; it reads EENRTQNCSG…TVPATSASSK (105 aa). Polar residues-rich tracts occupy residues 983–992, 1043–1061, and 1071–1083; these read TQNCSGSRKS, LKKTYSAENVPLTSTVSND, and STNTVPATSASSK. 3 positions are modified to phosphoserine: serine 1059, serine 1081, and serine 1082.

This sequence belongs to the RGC1 family.

It localises to the cytoplasm. In terms of biological role, positive regulator of FPS1 glycerol channel required for the glycerol efflux. The sequence is that of Regulator of the glycerol channel 1 (RGC1) from Saccharomyces cerevisiae (strain ATCC 204508 / S288c) (Baker's yeast).